A 162-amino-acid chain; its full sequence is Serine-protein kinase RsbW (162 aa).

It belongs to the anti-sigma-factor family.

It catalyses the reaction L-seryl-[protein] + ATP = O-phospho-L-seryl-[protein] + ADP + H(+). It carries out the reaction L-threonyl-[protein] + ATP = O-phospho-L-threonyl-[protein] + ADP + H(+). In terms of biological role, negative regulator of sigma-B activity. Phosphorylates and inactivates its specific antagonist protein, RsbV. Upon phosphorylation of RsbV, RsbW is released and binds to sigma-B, thereby blocking its ability to form an RNA polymerase holoenzyme (E-sigma-B). The sequence is that of Serine-protein kinase RsbW from Bacillus pumilus (strain SAFR-032).